Here is a 544-residue protein sequence, read N- to C-terminus: Putative glycerol-3-phosphate transporter 4 (544 aa).

Helical transmembrane passes span 28 to 47, 121 to 141, 156 to 176, 181 to 201, 218 to 238, and 240 to 260; these read TFRY…YHAS, VAFL…GDSL, FFVG…WFFL, AAGL…GNWF, SVGN…GWGW, and FIAP…FLAA. The segment at 281-313 is disordered; it reads KRDVEEEEEEVEEDLGTDVEGDGEGSSGSGSGY. Acidic residues predominate over residues 285-303; the sequence is EEEEEEVEEDLGTDVEGDG. The next 7 membrane-spanning stretches (helical) occupy residues 319-339, 342-362, 371-391, 402-422, 428-448, 471-491, and 494-514; these read VGLL…CLFF, LVAY…TIGG, GNLS…CGYI, AAAF…YGGV, ILLM…ITTA, AIID…TGFL, and LGWQ…GLLL.

It belongs to the major facilitator superfamily. Organophosphate:Pi antiporter (OPA) (TC 2.A.1.4) family.

The protein localises to the membrane. The protein is Putative glycerol-3-phosphate transporter 4 of Arabidopsis thaliana (Mouse-ear cress).